Reading from the N-terminus, the 161-residue chain is Cytochrome c-type biogenesis protein CcmE (161 aa).

The Cytoplasmic portion of the chain corresponds to 1–8 (MNPRRKKR). Residues 9 to 29 (LTLAVALVFGLGATIGLMLYA) traverse the membrane as a helical; Signal-anchor for type II membrane protein segment. The Periplasmic segment spans residues 30-161 (LSQNMDLFYT…SDEQKQGRVQ (132 aa)). 2 residues coordinate heme: histidine 129 and tyrosine 133.

Belongs to the CcmE/CycJ family.

The protein resides in the cell inner membrane. Heme chaperone required for the biogenesis of c-type cytochromes. Transiently binds heme delivered by CcmC and transfers the heme to apo-cytochromes in a process facilitated by CcmF and CcmH. This chain is Cytochrome c-type biogenesis protein CcmE, found in Photobacterium profundum (strain SS9).